A 461-amino-acid chain; its full sequence is MTLSIYSTLSKGKEAFKPLEGNKVRMYVCGMTVYDFCHIGHARVMVAFDVVSRWLRHSGYDVTYVRNITDIDDKIIRRANENGESFQDLVGRMIAAMHEDEARLNVLRPDSEPRATDHIAGMHAMIRTLIDKSYAYAPGNGDVYYRVGKFEGYGKLSRRKIEDLKIGARIEPGEAKEDPLDFVLWKGAKPGEPSWESPWGAGRPGWHIECSVMSTCCLGETFDIHGGGPDLVFPHHENEIAQSEAATGKRYANIWMHAGAVRVDGEKMSKSLGNFFTIREVLEKYHPEVVRYLLVSSHYRSPINYSEDSLREARAALERFYNALKGLPAAQPTGGDEYVARFNAAMNDDFNTPEACAVLFELAREVNRLRDTDLQSAASLAARLKELGGLLGVLQLEPEAFLQAGAADRVDAAEVEALIAARLAARAGKNWAESDRIRDQLAAMGVLLEDGKNGTTWRLVD.

C29 contacts Zn(2+). The short motif at M31–H41 is the 'HIGH' region element. Residues C210, H235, and E239 each coordinate Zn(2+). The short motif at K267–S271 is the 'KMSKS' region element. K270 lines the ATP pocket.

It belongs to the class-I aminoacyl-tRNA synthetase family. As to quaternary structure, monomer. Zn(2+) serves as cofactor.

It localises to the cytoplasm. It carries out the reaction tRNA(Cys) + L-cysteine + ATP = L-cysteinyl-tRNA(Cys) + AMP + diphosphate. This chain is Cysteine--tRNA ligase, found in Azotobacter vinelandii (strain DJ / ATCC BAA-1303).